We begin with the raw amino-acid sequence, 108 residues long: Peptidyl-prolyl cis-trans isomerase FKBP1C (108 aa).

The 89-residue stretch at 20 to 108 (SQTCVMHYTG…VFDVELLKLE (89 aa)) folds into the PPIase FKBP-type domain.

Belongs to the FKBP-type PPIase family. FKBP1 subfamily.

The catalysed reaction is [protein]-peptidylproline (omega=180) = [protein]-peptidylproline (omega=0). Functionally, catalyzes the cis-trans isomerization of proline imidic peptide bonds in oligopeptides. The polypeptide is Peptidyl-prolyl cis-trans isomerase FKBP1C (Homo sapiens (Human)).